A 64-amino-acid polypeptide reads, in one-letter code: MRIHVDQDKCCGAGSCVLAAPDVFDQREEDGIVVLLDTAPPAALHDAVREAATICPAAAITVTD.

The 4Fe-4S ferredoxin-type domain occupies 2-29 (RIHVDQDKCCGAGSCVLAAPDVFDQREE). Cys-10, Cys-16, and Cys-55 together coordinate [3Fe-4S] cluster.

[3Fe-4S] cluster is required as a cofactor.

Electron transport protein for the cytochrome P-450-SU2 system. In Streptomyces griseolus, this protein is Ferredoxin-2 (subB).